We begin with the raw amino-acid sequence, 167 residues long: Lipoprotein signal peptidase (167 aa).

The next 3 membrane-spanning stretches (helical) occupy residues 9 to 29 (AWLY…TKNL), 68 to 88 (LPLL…YALY), and 98 to 118 (MGLI…LGMV). Active-site residues include Asp-120 and Asp-138. A helical membrane pass occupies residues 130–150 (YWPAFNIADASISIGIALLIL).

This sequence belongs to the peptidase A8 family.

It is found in the cell inner membrane. It carries out the reaction Release of signal peptides from bacterial membrane prolipoproteins. Hydrolyzes -Xaa-Yaa-Zaa-|-(S,diacylglyceryl)Cys-, in which Xaa is hydrophobic (preferably Leu), and Yaa (Ala or Ser) and Zaa (Gly or Ala) have small, neutral side chains.. It functions in the pathway protein modification; lipoprotein biosynthesis (signal peptide cleavage). Functionally, this protein specifically catalyzes the removal of signal peptides from prolipoproteins. In Aquifex aeolicus (strain VF5), this protein is Lipoprotein signal peptidase.